We begin with the raw amino-acid sequence, 144 residues long: Large ribosomal subunit protein uL15 (144 aa).

Residues 1 to 25 are disordered; the sequence is MFLNTIGARDGSRPEKKRVGRGIGS.

Belongs to the universal ribosomal protein uL15 family. As to quaternary structure, part of the 50S ribosomal subunit.

Functionally, binds to the 23S rRNA. The chain is Large ribosomal subunit protein uL15 from Methylococcus capsulatus (strain ATCC 33009 / NCIMB 11132 / Bath).